A 69-amino-acid polypeptide reads, in one-letter code: Conotoxin Gla-TxXI (69 aa).

Residues 1-25 (MVRVTSVGCFLLVIVSLNLVVLTNA) form the signal peptide. 4 disulfides stabilise this stretch: Cys-26–Cys-40, Cys-33–Cys-45, Cys-39–Cys-49, and Cys-44–Cys-53. Residue Glu-29 is modified to 4-carboxyglutamate. Pro-56 carries the post-translational modification Proline amide. Positions 60–69 (AKLLEFFRQR) are excised as a propeptide.

In terms of processing, contains 4 disulfide bonds. As to expression, expressed by the venom duct.

Its subcellular location is the secreted. The sequence is that of Conotoxin Gla-TxXI from Conus textile (Cloth-of-gold cone).